The chain runs to 155 residues: Myosin light chain alkali (155 aa).

2 consecutive EF-hand domains span residues Arg-7–Asn-41 and Gly-80–Ser-115.

As to quaternary structure, myosin is a hexamer of 2 heavy chains and 4 light chains.

This chain is Myosin light chain alkali (Mlc1), found in Drosophila simulans (Fruit fly).